The sequence spans 244 residues: Protein-L-isoaspartate O-methyltransferase (244 aa).

Positions 1–39 (MINPFSSFRWRHSSRSPAGIPEVEPQPPDASDPFASQRE) are disordered. The active site involves serine 92.

This sequence belongs to the methyltransferase superfamily. L-isoaspartyl/D-aspartyl protein methyltransferase family.

The protein localises to the cytoplasm. The catalysed reaction is [protein]-L-isoaspartate + S-adenosyl-L-methionine = [protein]-L-isoaspartate alpha-methyl ester + S-adenosyl-L-homocysteine. Functionally, catalyzes the methyl esterification of L-isoaspartyl residues in peptides and proteins that result from spontaneous decomposition of normal L-aspartyl and L-asparaginyl residues. It plays a role in the repair and/or degradation of damaged proteins. This Synechococcus sp. (strain JA-2-3B'a(2-13)) (Cyanobacteria bacterium Yellowstone B-Prime) protein is Protein-L-isoaspartate O-methyltransferase.